The primary structure comprises 474 residues: MKSVVRSKGTQALFRRFSSALGDSINPNQVGVGDNVIRVNGRLFEVDKVQEKGLKTSVLDNGTKVITLDNGGSVAQLTFLYKDGPVYENIFNAGISSFMKHALTKDGLTSSEYITKTFLQKAGIIVHEPTVVNKSAIAFTVEGFRDTLAQPAVADKFWQSLLFPRFSPENVKEVKRLVELESKETKRDSPFAYLQDILHKTAFKGSPLGHTSFVPAYNLGYIDSNKLFDRWDAHYGFGNIAVIATNIEHEAVLAAITDSAWVARAHNKVGGVAAPASKYSGGEGYDVVHRAKEFDDQFTDVYSTYTAYAFKAPGRSNLKEHAASLVIAQALSNAVSPVLNTSFAPKRLEVFYQAYDTVGLIGLSSVQASNAQLKAFKAALSKIGTLSEADLAVHKSAALLTAYGNVESWRATQATLIDSFNTTGQPLSPLEIVSAIKAVSADTVKSVVATMLGSPATLVHHGDSPCAPTLDALQ.

Residues 1 to 42 (MKSVVRSKGTQALFRRFSSALGDSINPNQVGVGDNVIRVNGR) constitute a mitochondrion transit peptide.

Belongs to the peptidase M16 family. UQCRC2/QCR2 subfamily. Component of the ubiquinol-cytochrome c oxidoreductase (cytochrome b-c1 complex, complex III, CIII), a multisubunit enzyme composed of 3 respiratory subunits cytochrome b, cytochrome c1 and Rieske protein, 2 core protein subunits, and additional low-molecular weight protein subunits. The complex exists as an obligatory dimer and forms supercomplexes (SCs) in the inner mitochondrial membrane with cytochrome c oxidase (complex IV, CIV).

It localises to the mitochondrion inner membrane. Functionally, component of the ubiquinol-cytochrome c oxidoreductase, a multisubunit transmembrane complex that is part of the mitochondrial electron transport chain which drives oxidative phosphorylation. The respiratory chain contains 3 multisubunit complexes succinate dehydrogenase (complex II, CII), ubiquinol-cytochrome c oxidoreductase (cytochrome b-c1 complex, complex III, CIII) and cytochrome c oxidase (complex IV, CIV), that cooperate to transfer electrons derived from NADH and succinate to molecular oxygen, creating an electrochemical gradient over the inner membrane that drives transmembrane transport and the ATP synthase. The cytochrome b-c1 complex catalyzes electron transfer from ubiquinol to cytochrome c, linking this redox reaction to translocation of protons across the mitochondrial inner membrane, with protons being carried across the membrane as hydrogens on the quinol. In the process called Q cycle, 2 protons are consumed from the matrix, 4 protons are released into the intermembrane space and 2 electrons are passed to cytochrome c. This chain is Ubiquinol-cytochrome-c reductase complex core protein 2, mitochondrial, found in Euglena gracilis.